Reading from the N-terminus, the 287-residue chain is MKRVFLLIATNLAILLVASIVMSILGVNTSTMGGLLVFAAIFGFGGSFISLAISKWMAKKTMGCEVIVQPRDETERWLVDTVTRQAKQAGINMPEVAIYQSPEMNAFATGPSKNNALVAVSTGLLYGMTRDEIEGVLAHEVSHVANGDMVTLTLIQGVVNTFVIFAARVVAGIIDNFVSSNDEEGQGLGMFAYMGVVFVLDMLFGILASIIVAYFSRIREFKADEGAARLAGKDKMIAALERLRAGPESGAMPAQMSAFGINGKRSMADFMMSHPPLEKRIAALKNS.

2 helical membrane passes run 4 to 24 (VFLL…VMSI) and 33 to 53 (GGLL…SLAI). H139 contacts Zn(2+). The active site involves E140. H143 is a binding site for Zn(2+). 2 helical membrane-spanning segments follow: residues 154-174 (LIQG…AGII) and 195-215 (GVVF…VAYF). E220 lines the Zn(2+) pocket.

It belongs to the peptidase M48B family. Zn(2+) serves as cofactor.

The protein resides in the cell inner membrane. The chain is Protease HtpX from Shewanella denitrificans (strain OS217 / ATCC BAA-1090 / DSM 15013).